Reading from the N-terminus, the 416-residue chain is Gamma-glutamyl phosphate reductase (416 aa).

It belongs to the gamma-glutamyl phosphate reductase family.

The protein localises to the cytoplasm. It carries out the reaction L-glutamate 5-semialdehyde + phosphate + NADP(+) = L-glutamyl 5-phosphate + NADPH + H(+). The protein operates within amino-acid biosynthesis; L-proline biosynthesis; L-glutamate 5-semialdehyde from L-glutamate: step 2/2. Its function is as follows. Catalyzes the NADPH-dependent reduction of L-glutamate 5-phosphate into L-glutamate 5-semialdehyde and phosphate. The product spontaneously undergoes cyclization to form 1-pyrroline-5-carboxylate. The protein is Gamma-glutamyl phosphate reductase of Streptococcus thermophilus.